Consider the following 227-residue polypeptide: Ribosomal RNA small subunit methyltransferase G (227 aa).

S-adenosyl-L-methionine-binding positions include Gly-81, Leu-86, 131-132, and Arg-149; that span reads AE.

Belongs to the methyltransferase superfamily. RNA methyltransferase RsmG family.

It is found in the cytoplasm. Its function is as follows. Specifically methylates the N7 position of guanine in position 518 of 16S rRNA. The sequence is that of Ribosomal RNA small subunit methyltransferase G from Rhodococcus jostii (strain RHA1).